Consider the following 304-residue polypeptide: Probable intron-encoded endonuclease 1 (304 aa).

The GIY-YIG domain occupies 84–175 (DKGGIYSFIN…RFNFDNLYNF (92 aa)).

It to endonucleases of group I introns of fungi and phage.

The protein localises to the mitochondrion. Functionally, mitochondrial DNA endonuclease involved in intron homing. This chain is Probable intron-encoded endonuclease 1, found in Neurospora crassa (strain ATCC 24698 / 74-OR23-1A / CBS 708.71 / DSM 1257 / FGSC 987).